A 267-amino-acid chain; its full sequence is Acyl-[acyl-carrier-protein]--UDP-N-acetylglucosamine O-acyltransferase (267 aa).

This sequence belongs to the transferase hexapeptide repeat family. LpxA subfamily. In terms of assembly, homotrimer.

The protein localises to the cytoplasm. The enzyme catalyses a (3R)-hydroxyacyl-[ACP] + UDP-N-acetyl-alpha-D-glucosamine = a UDP-3-O-[(3R)-3-hydroxyacyl]-N-acetyl-alpha-D-glucosamine + holo-[ACP]. It functions in the pathway glycolipid biosynthesis; lipid IV(A) biosynthesis; lipid IV(A) from (3R)-3-hydroxytetradecanoyl-[acyl-carrier-protein] and UDP-N-acetyl-alpha-D-glucosamine: step 1/6. In terms of biological role, involved in the biosynthesis of lipid A, a phosphorylated glycolipid that anchors the lipopolysaccharide to the outer membrane of the cell. The polypeptide is Acyl-[acyl-carrier-protein]--UDP-N-acetylglucosamine O-acyltransferase (Cupriavidus metallidurans (strain ATCC 43123 / DSM 2839 / NBRC 102507 / CH34) (Ralstonia metallidurans)).